Here is a 444-residue protein sequence, read N- to C-terminus: 23S rRNA (uracil(1939)-C(5))-methyltransferase RlmD (444 aa).

The 60-residue stretch at 5-64 (KPKLNLTSQTARIVNLSHDGRGIARVNGKATFIQGALPGEVVEFQYTRVKKDFDEGKLLS) folds into the TRAM domain. Residues Cys-77, Cys-83, Cys-86, and Cys-166 each coordinate [4Fe-4S] cluster. 6 residues coordinate S-adenosyl-L-methionine: Gln-276, Phe-305, Asn-310, Glu-326, Asn-353, and Asp-374. The Nucleophile role is filled by Cys-400.

The protein belongs to the class I-like SAM-binding methyltransferase superfamily. RNA M5U methyltransferase family. RlmD subfamily.

The catalysed reaction is uridine(1939) in 23S rRNA + S-adenosyl-L-methionine = 5-methyluridine(1939) in 23S rRNA + S-adenosyl-L-homocysteine + H(+). In terms of biological role, catalyzes the formation of 5-methyl-uridine at position 1939 (m5U1939) in 23S rRNA. The sequence is that of 23S rRNA (uracil(1939)-C(5))-methyltransferase RlmD from Legionella pneumophila (strain Paris).